Reading from the N-terminus, the 423-residue chain is Testican-2 (423 aa).

The N-terminal stretch at 1–22 is a signal peptide; the sequence is MRAPGSGRLALPLLLLAVVALA. Ser72 bears the Phosphoserine mark. Cystine bridges form between Cys90/Cys101, Cys95/Cys111, Cys136/Cys166, Cys139/Cys159, and Cys148/Cys180. A Kazal-like domain is found at 130–182; sequence GGKDSVCKPCHMAQLASVCGSDGHTYSSVCKLEQQACLSSKQLAVRCEGPCPC. A glycan (N-linked (GlcNAc...) asparagine) is linked at Asn225. One can recognise a Thyroglobulin type-1 domain in the interval 309 to 375; that stretch reads KPPCLAELER…GTRMHGTPDC (67 aa). Disulfide bonds link Cys312–Cys336, Cys347–Cys354, and Cys356–Cys375. O-linked (Xyl...) (glycosaminoglycan) serine glycosylation is found at Ser382 and Ser387. Residues 387 to 423 are disordered; that stretch reads SGVGWEDEEEKETEEAGEEAEEEEGEAGEADDGGYIW. The segment covering 391 to 423 has biased composition (acidic residues); that stretch reads WEDEEEKETEEAGEEAEEEEGEAGEADDGGYIW.

O-glycosylated; contains chondroitin sulfate and heparan sulfate. In terms of tissue distribution, brain specific.

It is found in the secreted. The protein localises to the extracellular space. It localises to the extracellular matrix. Its function is as follows. May participate in diverse steps of neurogenesis. Binds calcium. The protein is Testican-2 (Spock2) of Mus musculus (Mouse).